The primary structure comprises 424 residues: UPF0597 protein Shew185_3080 (424 aa).

Belongs to the UPF0597 family.

The polypeptide is UPF0597 protein Shew185_3080 (Shewanella baltica (strain OS185)).